Here is a 299-residue protein sequence, read N- to C-terminus: Ribosomal protein L11 methyltransferase (299 aa).

S-adenosyl-L-methionine-binding residues include threonine 140, glycine 161, aspartate 183, and asparagine 232.

The protein belongs to the methyltransferase superfamily. PrmA family.

The protein localises to the cytoplasm. It carries out the reaction L-lysyl-[protein] + 3 S-adenosyl-L-methionine = N(6),N(6),N(6)-trimethyl-L-lysyl-[protein] + 3 S-adenosyl-L-homocysteine + 3 H(+). In terms of biological role, methylates ribosomal protein L11. This Synechococcus elongatus (strain ATCC 33912 / PCC 7942 / FACHB-805) (Anacystis nidulans R2) protein is Ribosomal protein L11 methyltransferase.